We begin with the raw amino-acid sequence, 180 residues long: Endoribonuclease YbeY (180 aa).

3 residues coordinate Zn(2+): H136, H140, and H146.

It belongs to the endoribonuclease YbeY family. Zn(2+) is required as a cofactor.

The protein localises to the cytoplasm. Its function is as follows. Single strand-specific metallo-endoribonuclease involved in late-stage 70S ribosome quality control and in maturation of the 3' terminus of the 16S rRNA. The sequence is that of Endoribonuclease YbeY from Synechococcus sp. (strain CC9902).